Reading from the N-terminus, the 437-residue chain is MLWKLTDNIKYEDCEDRHDGTSNGTARLPQLGTVGQSPYTSAPPLSHTPNADFQPPYFPPPYQPIYPQSQDPYSHVNDPYSLNPLHAQPQPQHPGWPGQRQSQESGLLHTHRGLPHQLSGLDPRRDYRRHEDLLHGPHALSSGLGDLSIHSLPHAIEEVPHVEDPGINIPDQTVIKKGPVSLSKSNSNAVSAIPINKDNLFGGVVNPNEVFCSVPGRLSLLSSTSKYKVTVAEVQRRLSPPECLNASLLGGVLRRAKSKNGGRSLREKLDKIGLNLPAGRRKAANVTLLTSLVEGEAVHLARDFGYVCETEFPAKAVAEFLNRQHSDPNEQVTRKNMLLATKQICKEFTDLLAQDRSPLGNSRPNPILEPGIQSCLTHFNLISHGFGSPAVCAAVTALQNYLTEALKAMDKMYLSNNPNSHTDNNAKSSDKEEKHRK.

A Glycyl lysine isopeptide (Lys-Gly) (interchain with G-Cter in SUMO); alternate cross-link involves residue lysine 10. A Glycyl lysine isopeptide (Lys-Gly) (interchain with G-Cter in SUMO2); alternate cross-link involves residue lysine 10. Residues 14 to 107 (CEDRHDGTSN…GQRQSQESGL (94 aa)) form a disordered region. Positions 57–62 (YFPPPY) match the PPxY motif motif. Composition is skewed to low complexity over residues 65-74 (IYPQSQDPYS) and 88-101 (QPQP…GQRQ). Residues lysine 177 and lysine 184 each participate in a glycyl lysine isopeptide (Lys-Gly) (interchain with G-Cter in SUMO2) cross-link. Residue serine 239 is modified to Phosphoserine; by PKA. The H-S-H (helix-span-helix), dimerization stretch occupies residues 280–410 (RRKAANVTLL…YLTEALKAMD (131 aa)). Positions 414–427 (LSNNPNSHTDNNAK) are enriched in polar residues. The tract at residues 414-437 (LSNNPNSHTDNNAKSSDKEEKHRK) is disordered. The span at 428 to 437 (SSDKEEKHRK) shows a compositional bias: basic and acidic residues.

The protein belongs to the AP-2 family. Binds DNA as a dimer. Can form homodimers or heterodimers with other AP-2 family members. Interacts with WWOX. Interacts with CITED4. Interacts with UBE2I. Interacts with RALBP1 in a complex also containing EPN1 and NUMB during interphase and mitosis. Interacts with KCTD1; this interaction represses transcription activation. Interacts (via C-terminus) with CITED2 (via C-terminus); the interaction stimulates TFAP2A-transcriptional activation. Interacts (via N-terminus) with EP300 (via N-terminus); the interaction requires CITED2. Interacts with KCTD15; this interaction inhibits TFAP2A transcriptional activation. Post-translationally, sumoylated on Lys-10; which inhibits transcriptional activity.

The protein localises to the nucleus. Its function is as follows. Sequence-specific DNA-binding protein that interacts with inducible viral and cellular enhancer elements to regulate transcription of selected genes. AP-2 factors bind to the consensus sequence 5'-GCCNNNGGC-3' and activate genes involved in a large spectrum of important biological functions including proper eye, face, body wall, limb and neural tube development. They also suppress a number of genes including MCAM/MUC18, C/EBP alpha and MYC. AP-2-alpha is the only AP-2 protein required for early morphogenesis of the lens vesicle. Together with the CITED2 coactivator, stimulates the PITX2 P1 promoter transcription activation. Associates with chromatin to the PITX2 P1 promoter region. This chain is Transcription factor AP-2-alpha (TFAP2A), found in Homo sapiens (Human).